A 235-amino-acid chain; its full sequence is RING-H2 finger protein ATL33 (235 aa).

A helical transmembrane segment spans residues leucine 64 to asparagine 84. The segment at cysteine 87–threonine 133 is disordered. Residues serine 88 to serine 103 are compositionally biased toward low complexity. Over residues isoleucine 116 to serine 125 the composition is skewed to polar residues. The segment at cysteine 142 to arginine 184 adopts an RING-type; atypical zinc-finger fold. Positions asparagine 201–serine 216 are enriched in low complexity. The tract at residues asparagine 201 to valine 235 is disordered.

The protein belongs to the RING-type zinc finger family. ATL subfamily.

Its subcellular location is the membrane. The enzyme catalyses S-ubiquitinyl-[E2 ubiquitin-conjugating enzyme]-L-cysteine + [acceptor protein]-L-lysine = [E2 ubiquitin-conjugating enzyme]-L-cysteine + N(6)-ubiquitinyl-[acceptor protein]-L-lysine.. Its pathway is protein modification; protein ubiquitination. The polypeptide is RING-H2 finger protein ATL33 (ATL33) (Arabidopsis thaliana (Mouse-ear cress)).